A 570-amino-acid polypeptide reads, in one-letter code: Dual specificity testis-specific protein kinase 2 (570 aa).

The Protein kinase domain occupies 58–313 (DFTREKIGSG…EIGKTLEEIM (256 aa)). Residues 64-72 (IGSGFFSEV) and lysine 87 contribute to the ATP site. Aspartate 176 acts as the Proton acceptor in catalysis. Serine 219 carries the post-translational modification Phosphoserine; by autocatalysis. Phosphoserine occurs at positions 369, 456, and 460. Residues 513–570 (DCSNPQEENGFVPRPKGTSPCSGAASEEMEVEEERPRRAPVHFSISGISLQTQGEQDG) are disordered. The segment covering 558 to 570 (SGISLQTQGEQDG) has biased composition (polar residues).

Belongs to the protein kinase superfamily. TKL Ser/Thr protein kinase family. The cofactor is Mg(2+). Requires Mn(2+) as cofactor. In terms of tissue distribution, predominantly expressed in testis and prostate. Found predominantly in non-germinal Sertoli cells.

The protein resides in the nucleus. The enzyme catalyses L-seryl-[protein] + ATP = O-phospho-L-seryl-[protein] + ADP + H(+). It catalyses the reaction L-threonyl-[protein] + ATP = O-phospho-L-threonyl-[protein] + ADP + H(+). The catalysed reaction is L-tyrosyl-[protein] + ATP = O-phospho-L-tyrosyl-[protein] + ADP + H(+). With respect to regulation, activated by autophosphorylation on Ser-219. Functionally, dual specificity protein kinase activity catalyzing autophosphorylation and phosphorylation of exogenous substrates on both serine/threonine and tyrosine residues. Phosphorylates cofilin at 'Ser-3'. May play an important role in spermatogenesis. This is Dual specificity testis-specific protein kinase 2 (Tesk2) from Rattus norvegicus (Rat).